An 886-amino-acid polypeptide reads, in one-letter code: Isoleucine--tRNA ligase (886 aa).

The 'HIGH' region signature appears at 60 to 70; that stretch reads PYANGDIHIGH. Residue glutamate 546 coordinates L-isoleucyl-5'-AMP. The short motif at 587 to 591 is the 'KMSKS' region element; sequence KMSKS. Lysine 590 is an ATP binding site. Positions 856, 859, 870, and 873 each coordinate Zn(2+).

Belongs to the class-I aminoacyl-tRNA synthetase family. IleS type 1 subfamily. As to quaternary structure, monomer. It depends on Zn(2+) as a cofactor.

Its subcellular location is the cytoplasm. The catalysed reaction is tRNA(Ile) + L-isoleucine + ATP = L-isoleucyl-tRNA(Ile) + AMP + diphosphate. Catalyzes the attachment of isoleucine to tRNA(Ile). As IleRS can inadvertently accommodate and process structurally similar amino acids such as valine, to avoid such errors it has two additional distinct tRNA(Ile)-dependent editing activities. One activity is designated as 'pretransfer' editing and involves the hydrolysis of activated Val-AMP. The other activity is designated 'posttransfer' editing and involves deacylation of mischarged Val-tRNA(Ile). In Mesomycoplasma hyopneumoniae (strain J / ATCC 25934 / NCTC 10110) (Mycoplasma hyopneumoniae), this protein is Isoleucine--tRNA ligase.